The following is a 158-amino-acid chain: 3-dehydroquinate dehydratase (158 aa).

The Proton acceptor role is filled by tyrosine 24. Residues asparagine 75, histidine 81, and aspartate 88 each coordinate substrate. Histidine 101 functions as the Proton donor in the catalytic mechanism. Residues 102–103 (LS) and arginine 112 each bind substrate.

The protein belongs to the type-II 3-dehydroquinase family. In terms of assembly, homododecamer.

The enzyme catalyses 3-dehydroquinate = 3-dehydroshikimate + H2O. It participates in metabolic intermediate biosynthesis; chorismate biosynthesis; chorismate from D-erythrose 4-phosphate and phosphoenolpyruvate: step 3/7. In terms of biological role, catalyzes a trans-dehydration via an enolate intermediate. This chain is 3-dehydroquinate dehydratase, found in Bartonella bacilliformis (strain ATCC 35685 / KC583 / Herrer 020/F12,63).